The sequence spans 93 residues: uncharacterized protein (93 aa).

The protein to B.subtilis YdcN C-terminal region.

This is an uncharacterized protein from Methanocaldococcus jannaschii (strain ATCC 43067 / DSM 2661 / JAL-1 / JCM 10045 / NBRC 100440) (Methanococcus jannaschii).